The following is a 640-amino-acid chain: UvrABC system protein C (640 aa).

The GIY-YIG domain occupies 22–101 (NDPGCYLMKD…IKSHQPYFNV (80 aa)). In terms of domain architecture, UVR spans 211–246 (DELRILLEKQMISFSESLKFEEAGSVRDQLKGIDRL).

The protein belongs to the UvrC family. In terms of assembly, interacts with UvrB in an incision complex.

It is found in the cytoplasm. Its function is as follows. The UvrABC repair system catalyzes the recognition and processing of DNA lesions. UvrC both incises the 5' and 3' sides of the lesion. The N-terminal half is responsible for the 3' incision and the C-terminal half is responsible for the 5' incision. The polypeptide is UvrABC system protein C (Prochlorococcus marinus (strain NATL2A)).